The following is a 396-amino-acid chain: Elongation factor Tu (396 aa).

One can recognise a tr-type G domain in the interval 10–206 (KPHVNIGTIG…AVDESVPDPV (197 aa)). Residues 19–26 (GHVDHGKT) are G1. 19–26 (GHVDHGKT) is a GTP binding site. Residue Thr26 coordinates Mg(2+). Residues 62–66 (GITIN) are G2. Residues 83–86 (DAPG) form a G3 region. GTP contacts are provided by residues 83 to 87 (DAPGH) and 138 to 141 (NKSD). The tract at residues 138–141 (NKSD) is G4. Residues 176–178 (SGL) form a G5 region.

It belongs to the TRAFAC class translation factor GTPase superfamily. Classic translation factor GTPase family. EF-Tu/EF-1A subfamily. Monomer.

It localises to the cytoplasm. It catalyses the reaction GTP + H2O = GDP + phosphate + H(+). In terms of biological role, GTP hydrolase that promotes the GTP-dependent binding of aminoacyl-tRNA to the A-site of ribosomes during protein biosynthesis. This Pseudarthrobacter chlorophenolicus (strain ATCC 700700 / DSM 12829 / CIP 107037 / JCM 12360 / KCTC 9906 / NCIMB 13794 / A6) (Arthrobacter chlorophenolicus) protein is Elongation factor Tu.